The chain runs to 220 residues: Uracil-DNA glycosylase (220 aa).

The active-site Proton acceptor is the D61.

Belongs to the uracil-DNA glycosylase (UDG) superfamily. UNG family.

Its subcellular location is the cytoplasm. It carries out the reaction Hydrolyzes single-stranded DNA or mismatched double-stranded DNA and polynucleotides, releasing free uracil.. Excises uracil residues from the DNA which can arise as a result of misincorporation of dUMP residues by DNA polymerase or due to deamination of cytosine. The sequence is that of Uracil-DNA glycosylase from Pseudoalteromonas translucida (strain TAC 125).